We begin with the raw amino-acid sequence, 960 residues long: Endosome/lysosome-associated apoptosis and autophagy regulator family member 2 (960 aa).

Residues 1 to 26 form a disordered region; it reads MLFLRPGPARGRGRGRPARAPHSGLS. The N-terminal stretch at 1–44 is a signal peptide; it reads MLFLRPGPARGRGRGRPARAPHSGLSPPWSPAWICCWALAGCQA. The Extracellular segment spans residues 45-860; sequence AWAGAGDLPS…TCETVDFWLK (816 aa). Residue Asn171 is glycosylated (N-linked (GlcNAc...) asparagine). 3 cysteine pairs are disulfide-bonded: Cys295-Cys312, Cys325-Cys348, and Cys328-Cys360. N-linked (GlcNAc...) asparagine glycosylation is found at Asn407 and Asn622. The region spanning 597 to 808 is the MRH domain; it reads PTCPYIRSMA…LWESVEACPL (212 aa). Intrachain disulfides connect Cys599/Cys651, Cys661/Cys689, Cys758/Cys794, and Cys770/Cys806. Residues 861 to 881 form a helical membrane-spanning segment; sequence VGAGVGAFTAVLLVALTCYFW. Residues 882-960 are Cytoplasmic-facing; sequence KKNQKLEYKY…QLKSSRSPNI (79 aa). The residue at position 949 (Ser949) is a Phosphoserine.

It belongs to the ELAPOR family.

It is found in the cell membrane. In terms of biological role, functions as a regulator of the BMP signaling pathway and may be involved in epidermal differentiation. This is Endosome/lysosome-associated apoptosis and autophagy regulator family member 2 from Bos taurus (Bovine).